The primary structure comprises 112 residues: Protein ECM19 (112 aa).

Residues 35 to 57 (NTLDMVTIGIACLVGVYTGTRFF) traverse the membrane as a helical segment. Residues 82 to 112 (EDGNLLKVTPSLSSTPAAPPTPPTPPTPPQQ) form a disordered region. Over residues 98-112 (AAPPTPPTPPTPPQQ) the composition is skewed to pro residues.

The protein localises to the mitochondrion membrane. In terms of biological role, may be involved in cell wall organization and biogenesis. This Saccharomyces cerevisiae (strain ATCC 204508 / S288c) (Baker's yeast) protein is Protein ECM19 (ECM19).